We begin with the raw amino-acid sequence, 161 residues long: RNA pyrophosphohydrolase (161 aa).

The 143-residue stretch at 12–154 (PYRPGVGMMI…KRKLYQAVVK (143 aa)) folds into the Nudix hydrolase domain. Positions 46–67 (GGIVPGETPSIAAMREMLEEIG) match the Nudix box motif.

It belongs to the Nudix hydrolase family. RppH subfamily. The cofactor is a divalent metal cation.

In terms of biological role, accelerates the degradation of transcripts by removing pyrophosphate from the 5'-end of triphosphorylated RNA, leading to a more labile monophosphorylated state that can stimulate subsequent ribonuclease cleavage. This Rickettsia africae (strain ESF-5) protein is RNA pyrophosphohydrolase.